Consider the following 276-residue polypeptide: tRNA (guanine-N(7)-)-methyltransferase (276 aa).

A disordered region spans residues 1-36 (MAAETRNVAGAEAPPPQKRYYRQRAHSNPMADHTLR). Ala2 bears the N-acetylalanine mark. Ser27 is modified (phosphoserine; by PKB/AKT1 and RPS6KA3). Gly84, Glu107, Ile108, Arg109, Asn140, Ala141, and Leu160 together coordinate S-adenosyl-L-homocysteine. The S-adenosyl-L-methionine site is built by Gly84 and Glu107. Positions 109, 140, 141, and 160 each coordinate S-adenosyl-L-methionine. Asp163 is a catalytic residue. The tract at residues 164–172 (PHFKRTKHK) is alphaC helix. Thr238 and Glu240 together coordinate S-adenosyl-L-homocysteine. The S-adenosyl-L-methionine site is built by Thr238 and Glu240. The alpha6 helix stretch occupies residues 238–246 (TEEGKKVLR).

It belongs to the class I-like SAM-binding methyltransferase superfamily. TrmB family. In terms of assembly, catalytic component of the METTL1-WDR4 complex, composed of METTL1 and WDR4. Post-translationally, phosphorylation at Ser-27 by PKB/AKT1 inactivates its methyltransferase activity via a steric interference mechanism in the active site that locally disrupts the catalytic center. Phosphorylation at Ser-27 does not affect the interaction with WDR4. As to expression, ubiquitous.

The protein resides in the nucleus. It carries out the reaction guanosine(46) in tRNA + S-adenosyl-L-methionine = N(7)-methylguanosine(46) in tRNA + S-adenosyl-L-homocysteine. The catalysed reaction is a guanosine in mRNA + S-adenosyl-L-methionine = an N(7)-methylguanosine in mRNA + S-adenosyl-L-homocysteine. It catalyses the reaction a guanosine in miRNA + S-adenosyl-L-methionine = an N(7)-methylguanosine in miRNA + S-adenosyl-L-homocysteine. The protein operates within tRNA modification; N(7)-methylguanine-tRNA biosynthesis. Functionally, catalytic component of METTL1-WDR4 methyltransferase complex that mediates the formation of N(7)-methylguanine in a subset of RNA species, such as tRNAs, mRNAs and microRNAs (miRNAs). Catalyzes the formation of N(7)-methylguanine at position 46 (m7G46) in a large subset of tRNAs that contain the 5'-RAGGU-3' motif within the variable loop. M7G46 interacts with C13-G22 in the D-loop to stabilize tRNA tertiary structure and protect tRNAs from decay. Also acts as a methyltransferase for a subset of internal N(7)-methylguanine in mRNAs. Internal N(7)-methylguanine methylation of mRNAs in response to stress promotes their relocalization to stress granules, thereby suppressing their translation. Also methylates a specific subset of miRNAs, such as let-7. N(7)-methylguanine methylation of let-7 miRNA promotes let-7 miRNA processing by disrupting an inhibitory secondary structure within the primary miRNA transcript (pri-miRNA). Acts as a regulator of embryonic stem cell self-renewal and differentiation. The chain is tRNA (guanine-N(7)-)-methyltransferase from Homo sapiens (Human).